The primary structure comprises 173 residues: Photosystem I assembly protein Ycf3 (173 aa).

TPR repeat units lie at residues 35-68 (AFVY…EEDT), 72-105 (GYIL…NPRL), and 120-153 (GEKA…APNN).

The protein belongs to the Ycf3 family.

Its subcellular location is the cellular thylakoid membrane. Essential for the assembly of the photosystem I (PSI) complex. May act as a chaperone-like factor to guide the assembly of the PSI subunits. The chain is Photosystem I assembly protein Ycf3 from Trichormus variabilis (strain ATCC 29413 / PCC 7937) (Anabaena variabilis).